The sequence spans 61 residues: Small ribosomal subunit protein uS14 (61 aa).

4 residues coordinate Zn(2+): cysteine 24, cysteine 27, cysteine 40, and cysteine 43.

This sequence belongs to the universal ribosomal protein uS14 family. Zinc-binding uS14 subfamily. In terms of assembly, part of the 30S ribosomal subunit. Contacts proteins S3 and S10. Zn(2+) serves as cofactor.

Binds 16S rRNA, required for the assembly of 30S particles and may also be responsible for determining the conformation of the 16S rRNA at the A site. This chain is Small ribosomal subunit protein uS14, found in Elusimicrobium minutum (strain Pei191).